Reading from the N-terminus, the 395-residue chain is Thyroid hormone receptor beta (395 aa).

The segment at 1–31 is modulating; that stretch reads MSEQADKCNSRWKDEAMQNGYIPSYLDKDEL. The segment at residues 29–106 is a DNA-binding region (nuclear receptor); sequence DELCVVCGDK…VGMATDLVLD (78 aa). Zn(2+) is bound by residues cysteine 32, cysteine 35, cysteine 49, cysteine 52, cysteine 70, cysteine 76, cysteine 86, and cysteine 89. 2 consecutive NR C4-type zinc fingers follow at residues 32 to 52 and 70 to 89; these read CVVCGDKATGYHYRCITCEGC and CKYEGKCVIDKVTRNQCQEC. Residues 142–395 form the NR LBD domain; the sequence is EEWEMIRVVT…PPLFLEVFED (254 aa). 3,3',5-triiodo-L-thyronine contacts are provided by arginine 216, asparagine 265, and histidine 369.

This sequence belongs to the nuclear hormone receptor family. NR1 subfamily. As to quaternary structure, interacts (via the ligand-binding domain) with ncoa2. As to expression, widely expressed in a range of adult tissues including the brain, eye, fin, gill, intestine, liver, swim bladder and ovary. In the eye, expressed in the outer nuclear layer of the retina.

The protein resides in the nucleus. Its function is as follows. Nuclear hormone receptor that can act as a repressor or activator of transcription. High affinity receptor for the thyroid gland hormone triiodothyronine (T3). Transactivating activity is ligand-dependent, and is repressed in the absence of T3. This chain is Thyroid hormone receptor beta (thrb), found in Danio rerio (Zebrafish).